A 231-amino-acid chain; its full sequence is Large ribosomal subunit protein uL1 (231 aa).

This sequence belongs to the universal ribosomal protein uL1 family. Part of the 50S ribosomal subunit.

Binds directly to 23S rRNA. The L1 stalk is quite mobile in the ribosome, and is involved in E site tRNA release. In terms of biological role, protein L1 is also a translational repressor protein, it controls the translation of the L11 operon by binding to its mRNA. This Acinetobacter baumannii (strain AB307-0294) protein is Large ribosomal subunit protein uL1.